A 586-amino-acid chain; its full sequence is CTP synthase (586 aa).

Positions 1 to 265 are amidoligase domain; that stretch reads MVRFIFVTGG…ENKVLNFFNI (265 aa). Position 13 (serine 13) interacts with CTP. Serine 13 contributes to the UTP binding site. Residues 14–19 and aspartate 71 each bind ATP; that span reads SLGKGI. Residues aspartate 71 and glutamate 139 each contribute to the Mg(2+) site. CTP-binding positions include 146-148, 186-191, and lysine 222; these read DIE and KTKPTQ. UTP is bound by residues 186 to 191 and lysine 222; that span reads KTKPTQ. Positions 290–582 constitute a Glutamine amidotransferase type-1 domain; the sequence is KIAIITKYHK…IKATIEYNKS (293 aa). Glycine 352 is an L-glutamine binding site. The active-site Nucleophile; for glutamine hydrolysis is the cysteine 379. Residues 380 to 383 and glutamate 403 each bind L-glutamine; that span reads FGMQ. Positions 429–473 constitute an RPE1 insert domain; it reads AHISKCTYSEAFECDASTVYTNIHEDSNNLSTDKLQIETNFRNMS. Arginine 510 is a binding site for L-glutamine. Catalysis depends on residues histidine 555 and glutamate 557.

The protein belongs to the CTP synthase family. As to quaternary structure, homotetramer.

It catalyses the reaction UTP + L-glutamine + ATP + H2O = CTP + L-glutamate + ADP + phosphate + 2 H(+). The enzyme catalyses L-glutamine + H2O = L-glutamate + NH4(+). It carries out the reaction UTP + NH4(+) + ATP = CTP + ADP + phosphate + 2 H(+). It participates in pyrimidine metabolism; CTP biosynthesis via de novo pathway; CTP from UDP: step 2/2. With respect to regulation, allosterically activated by GTP, when glutamine is the substrate; GTP has no effect on the reaction when ammonia is the substrate. The allosteric effector GTP functions by stabilizing the protein conformation that binds the tetrahedral intermediate(s) formed during glutamine hydrolysis. Inhibited by the product CTP, via allosteric rather than competitive inhibition. In terms of biological role, catalyzes the ATP-dependent amination of UTP to CTP with either L-glutamine or ammonia as the source of nitrogen. Regulates intracellular CTP levels through interactions with the four ribonucleotide triphosphates. This chain is CTP synthase, found in Rickettsia prowazekii (strain Madrid E).